A 358-amino-acid chain; its full sequence is Protein ocs (358 aa).

This sequence belongs to the lysopine/nopaline/octopine/opine/vitopine dehydrogenases family.

The catalysed reaction is D-octopine + NAD(+) + H2O = L-arginine + pyruvate + NADH + H(+). It carries out the reaction D-lysopine + NADP(+) + H2O = L-lysine + pyruvate + NADPH + H(+). Functionally, reductive condensation of pyruvate and arginine, lysine, histidine, or octopine to form octopine, lysopine, histopine, or octopinic acid, respectively. NADPH is the preferred cofactor, but NADH can also be used. In Agrobacterium vitis (Rhizobium vitis), this protein is Protein ocs (ocs).